We begin with the raw amino-acid sequence, 239 residues long: Ribonuclease PH (239 aa).

Residues Arg-86 and 124-126 (GTR) each bind phosphate.

Belongs to the RNase PH family. As to quaternary structure, homohexameric ring arranged as a trimer of dimers.

The catalysed reaction is tRNA(n+1) + phosphate = tRNA(n) + a ribonucleoside 5'-diphosphate. Phosphorolytic 3'-5' exoribonuclease that plays an important role in tRNA 3'-end maturation. Removes nucleotide residues following the 3'-CCA terminus of tRNAs; can also add nucleotides to the ends of RNA molecules by using nucleoside diphosphates as substrates, but this may not be physiologically important. Probably plays a role in initiation of 16S rRNA degradation (leading to ribosome degradation) during starvation. The protein is Ribonuclease PH of Rickettsia africae (strain ESF-5).